A 206-amino-acid polypeptide reads, in one-letter code: tRNA(Phe) 7-((3-amino-3-carboxypropyl)-4-demethylwyosine(37)-N(4))-methyltransferase 2 (206 aa).

It belongs to the TYW3 family.

The enzyme catalyses 4-demethyl-7-[(3S)-3-amino-3-carboxypropyl]wyosine(37) in tRNA(Phe) + S-adenosyl-L-methionine = 7-[(3S)-3-amino-3-carboxypropyl]wyosine(37) in tRNA(Phe) + S-adenosyl-L-homocysteine + H(+). In terms of biological role, S-adenosyl-L-methionine-dependent methyltransferase that acts as a component of the wyosine derivatives biosynthesis pathway. Probably methylates N-4 position of wybutosine-86 to produce wybutosine-72. The sequence is that of tRNA(Phe) 7-((3-amino-3-carboxypropyl)-4-demethylwyosine(37)-N(4))-methyltransferase 2 from Pyrococcus abyssi (strain GE5 / Orsay).